Reading from the N-terminus, the 170-residue chain is Peptide deformylase (170 aa).

The Fe cation site is built by Cys91 and His133. Residue Glu134 is part of the active site. His137 serves as a coordination point for Fe cation.

The protein belongs to the polypeptide deformylase family. Fe(2+) is required as a cofactor.

The catalysed reaction is N-terminal N-formyl-L-methionyl-[peptide] + H2O = N-terminal L-methionyl-[peptide] + formate. Functionally, removes the formyl group from the N-terminal Met of newly synthesized proteins. Requires at least a dipeptide for an efficient rate of reaction. N-terminal L-methionine is a prerequisite for activity but the enzyme has broad specificity at other positions. The protein is Peptide deformylase of Yersinia enterocolitica serotype O:8 / biotype 1B (strain NCTC 13174 / 8081).